The sequence spans 445 residues: UPF0210 protein SP_0239 (445 aa).

This sequence belongs to the UPF0210 family. Homodimer.

The chain is UPF0210 protein SP_0239 from Streptococcus pneumoniae serotype 4 (strain ATCC BAA-334 / TIGR4).